The primary structure comprises 443 residues: Oxygen-dependent coproporphyrinogen-III oxidase, mitochondrial (443 aa).

A mitochondrion-targeting transit peptide spans 1 to 98; the sequence is MALRLGQLGS…EMVPKSSGAR (98 aa). The disordered stretch occupies residues 90-111; it reads MVPKSSGARSPSPGRLEEDGDE. At Ser-101 the chain carries Phosphoserine. Residues 182-191 are important for dimerization; sequence VLQDGRVFEK. Ser-233 contacts coproporphyrinogen III. The Proton donor role is filled by His-247. 249-251 is a coproporphyrinogen III binding site; that stretch reads NYR. Residues 381 to 417 are important for dimerization; sequence YVEFNLVYDRGTKFGLFTPGSRIESILMSLPLTARWE. The residue at position 393 (Lys-393) is an N6-acetyllysine; alternate. Lys-393 bears the N6-succinyllysine; alternate mark. 400–402 is a binding site for coproporphyrinogen III; that stretch reads GSR.

This sequence belongs to the aerobic coproporphyrinogen-III oxidase family. In terms of assembly, homodimer.

Its subcellular location is the mitochondrion intermembrane space. The enzyme catalyses coproporphyrinogen III + O2 + 2 H(+) = protoporphyrinogen IX + 2 CO2 + 2 H2O. Its pathway is porphyrin-containing compound metabolism; protoporphyrin-IX biosynthesis; protoporphyrinogen-IX from coproporphyrinogen-III (O2 route): step 1/1. Involved in the heme biosynthesis. Catalyzes the aerobic oxidative decarboxylation of propionate groups of rings A and B of coproporphyrinogen-III to yield the vinyl groups in protoporphyrinogen-IX. This Rattus norvegicus (Rat) protein is Oxygen-dependent coproporphyrinogen-III oxidase, mitochondrial.